A 344-amino-acid chain; its full sequence is S-methyl-5'-thioadenosine phosphorylase (344 aa).

Phosphate is bound by residues threonine 45, arginine 88 to histidine 89, and serine 121 to alanine 122. Substrate is bound at residue methionine 238. Serine 239 is a binding site for phosphate. Aspartate 262–aspartate 264 serves as a coordination point for substrate.

This sequence belongs to the PNP/MTAP phosphorylase family. MTAP subfamily. In terms of assembly, homotrimer.

It localises to the cytoplasm. Its subcellular location is the nucleus. The enzyme catalyses S-methyl-5'-thioadenosine + phosphate = 5-(methylsulfanyl)-alpha-D-ribose 1-phosphate + adenine. It functions in the pathway amino-acid biosynthesis; L-methionine biosynthesis via salvage pathway; S-methyl-5-thio-alpha-D-ribose 1-phosphate from S-methyl-5'-thioadenosine (phosphorylase route): step 1/1. Catalyzes the reversible phosphorylation of S-methyl-5'-thioadenosine (MTA) to adenine and 5-methylthioribose-1-phosphate. Involved in the breakdown of MTA, a major by-product of polyamine biosynthesis. Responsible for the first step in the methionine salvage pathway after MTA has been generated from S-adenosylmethionine. Has broad substrate specificity with 6-aminopurine nucleosides as preferred substrates. In Candida albicans (strain SC5314 / ATCC MYA-2876) (Yeast), this protein is S-methyl-5'-thioadenosine phosphorylase.